Here is a 261-residue protein sequence, read N- to C-terminus: Indole-3-glycerol phosphate synthase (261 aa).

Belongs to the TrpC family.

It carries out the reaction 1-(2-carboxyphenylamino)-1-deoxy-D-ribulose 5-phosphate + H(+) = (1S,2R)-1-C-(indol-3-yl)glycerol 3-phosphate + CO2 + H2O. It participates in amino-acid biosynthesis; L-tryptophan biosynthesis; L-tryptophan from chorismate: step 4/5. In Paraburkholderia phytofirmans (strain DSM 17436 / LMG 22146 / PsJN) (Burkholderia phytofirmans), this protein is Indole-3-glycerol phosphate synthase.